Reading from the N-terminus, the 1395-residue chain is DNA-directed RNA polymerase subunit beta' (1395 aa).

Cysteine 70, cysteine 72, cysteine 85, and cysteine 88 together coordinate Zn(2+). Mg(2+) is bound by residues aspartate 461, aspartate 463, and aspartate 465. 4 residues coordinate Zn(2+): cysteine 815, cysteine 889, cysteine 896, and cysteine 899.

This sequence belongs to the RNA polymerase beta' chain family. As to quaternary structure, the RNAP catalytic core consists of 2 alpha, 1 beta, 1 beta' and 1 omega subunit. When a sigma factor is associated with the core the holoenzyme is formed, which can initiate transcription. Mg(2+) serves as cofactor. The cofactor is Zn(2+).

It catalyses the reaction RNA(n) + a ribonucleoside 5'-triphosphate = RNA(n+1) + diphosphate. Functionally, DNA-dependent RNA polymerase catalyzes the transcription of DNA into RNA using the four ribonucleoside triphosphates as substrates. The protein is DNA-directed RNA polymerase subunit beta' of Ruthia magnifica subsp. Calyptogena magnifica.